Reading from the N-terminus, the 403-residue chain is Acetate kinase (403 aa).

Asn-8 contacts Mg(2+). Lys-15 contacts ATP. Arg-90 provides a ligand contact to substrate. Residue Asp-147 is the Proton donor/acceptor of the active site. ATP contacts are provided by residues 207 to 211 (HLGSG), 282 to 284 (DLR), and 330 to 334 (GVGEN). Glu-384 serves as a coordination point for Mg(2+).

Belongs to the acetokinase family. As to quaternary structure, homodimer. It depends on Mg(2+) as a cofactor. The cofactor is Mn(2+).

The protein resides in the cytoplasm. It carries out the reaction acetate + ATP = acetyl phosphate + ADP. It functions in the pathway metabolic intermediate biosynthesis; acetyl-CoA biosynthesis; acetyl-CoA from acetate: step 1/2. In terms of biological role, catalyzes the formation of acetyl phosphate from acetate and ATP. Can also catalyze the reverse reaction. The chain is Acetate kinase from Exiguobacterium sibiricum (strain DSM 17290 / CCUG 55495 / CIP 109462 / JCM 13490 / 255-15).